A 118-amino-acid chain; its full sequence is Large ribosomal subunit protein uL24c (118 aa).

This sequence belongs to the universal ribosomal protein uL24 family. Part of the 50S ribosomal subunit.

Its subcellular location is the plastid. It localises to the organellar chromatophore. One of two assembly initiator proteins, it binds directly to the 5'-end of the 23S rRNA, where it nucleates assembly of the 50S subunit. This Paulinella chromatophora protein is Large ribosomal subunit protein uL24c (rpl24).